Reading from the N-terminus, the 367-residue chain is Phosphoribosylaminoimidazole-succinocarboxamide synthase (367 aa).

The protein belongs to the SAICAR synthetase family.

It catalyses the reaction 5-amino-1-(5-phospho-D-ribosyl)imidazole-4-carboxylate + L-aspartate + ATP = (2S)-2-[5-amino-1-(5-phospho-beta-D-ribosyl)imidazole-4-carboxamido]succinate + ADP + phosphate + 2 H(+). Its pathway is purine metabolism; IMP biosynthesis via de novo pathway; 5-amino-1-(5-phospho-D-ribosyl)imidazole-4-carboxamide from 5-amino-1-(5-phospho-D-ribosyl)imidazole-4-carboxylate: step 1/2. In Vibrio vulnificus (strain CMCP6), this protein is Phosphoribosylaminoimidazole-succinocarboxamide synthase.